The primary structure comprises 350 residues: C5a anaphylatoxin chemotactic receptor 1 (350 aa).

The Extracellular segment spans residues 1–37 (MDSFNYTTPDYGHYDDKDTLDLNTPVDKTSNTLRVPD). A glycan (N-linked (GlcNAc...) asparagine) is linked at Asn5. Residues 10–18 (DYGHYDDKD) form a required for CHIPS binding region. Sulfotyrosine is present on residues Tyr11 and Tyr14. The segment at 21–30 (DLNTPVDKTS) is involved in C5a binding. The helical transmembrane segment at 38–64 (ILALVIFAVVFLVGVLGNALVVWVTAF) threads the bilayer. Topologically, residues 65–69 (EAKRT) are cytoplasmic. A helical membrane pass occupies residues 70–93 (INAIWFLNLAVADFLSCLALPILF). Topologically, residues 94-110 (TSIVQHHHWPFGGAACS) are extracellular. Cys109 and Cys188 are joined by a disulfide. Residues 111–132 (ILPSLILLNMYASILLLATISA) form a helical membrane-spanning segment. Over 133–153 (DRFLLVFKPIWCQNFRGAGLA) the chain is Cytoplasmic. A helical transmembrane segment spans residues 154–174 (WIACAVAWGLALLLTIPSFLY). Residues 175–200 (RVVREEYFPPKVLCGVDYSHDKRRER) lie on the Extracellular side of the membrane. A helical transmembrane segment spans residues 201 to 226 (AVAIVRLVLGFLWPLLTLTICYTFIL). The Cytoplasmic segment spans residues 227-242 (LRTWSRRATRSTKTLK). Residues 243–265 (VVVAVVASFFIFWLPYQVTGIMM) traverse the membrane as a helical segment. Residues 266-282 (SFLEPSSPTFLLLKKLD) lie on the Extracellular side of the membrane. A helical membrane pass occupies residues 283-303 (SLCVSFAYINCCINPIIYVVA). The Cytoplasmic portion of the chain corresponds to 304 to 350 (GQGFQGRLRKSLPSLLRNVLTEESVVRESKSFTRSTVDTMAQKTQAV). Phosphoserine is present on residues Ser314, Ser317, Ser327, Ser332, Ser334, and Ser338.

This sequence belongs to the G-protein coupled receptor 1 family. As to quaternary structure, homodimer. May also form higher-order oligomers. Interacts (when phosphorylated) with ARRB1 and ARRB2; the interaction is associated with internalization of C5aR. Interacts (via N-terminal domain) with S.aureus chemotaxis inhibitory protein (CHIPS); the interaction blocks the receptor and may thus inhibit the immune response. In terms of processing, sulfation plays a critical role in the association of C5aR with C5a, but no significant role in the ability of the receptor to transduce a signal and mobilize calcium in response to a small a small peptide agonist. Sulfation at Tyr-14 is important for CHIPS binding. Post-translationally, phosphorylated on serine residues in response to C5a binding, resulting in internalization of the receptor and short-term desensitization to the ligand. The key residues involved in this process are Ser-334 and Ser-338.

Its subcellular location is the cell membrane. It is found in the cytoplasmic vesicle. Receptor for the chemotactic and inflammatory peptide anaphylatoxin C5a. The ligand interacts with at least two sites on the receptor: a high-affinity site on the extracellular N-terminus, and a second site in the transmembrane region which activates downstream signaling events. Receptor activation stimulates chemotaxis, granule enzyme release, intracellular calcium release and superoxide anion production. The sequence is that of C5a anaphylatoxin chemotactic receptor 1 (C5AR1) from Homo sapiens (Human).